We begin with the raw amino-acid sequence, 213 residues long: Putative manganese efflux pump MntP (213 aa).

6 helical membrane passes run 3 to 23 (ILSI…VSVA), 36 to 56 (ALKV…IGWG), 67 to 87 (AFDH…MIFE), 130 to 150 (LAIA…FLGI), 152 to 172 (IVQT…LGVI), and 187 to 207 (IVGG…HTGI).

Belongs to the MntP (TC 9.B.29) family.

It is found in the cell membrane. Functionally, probably functions as a manganese efflux pump. This Clostridium perfringens (strain 13 / Type A) protein is Putative manganese efflux pump MntP.